A 337-amino-acid polypeptide reads, in one-letter code: Ribosomal RNA small subunit methyltransferase H (337 aa).

Residues 45–47 (GGH), aspartate 64, phenylalanine 91, aspartate 120, and glutamine 127 each bind S-adenosyl-L-methionine.

The protein belongs to the methyltransferase superfamily. RsmH family.

Its subcellular location is the cytoplasm. The catalysed reaction is cytidine(1402) in 16S rRNA + S-adenosyl-L-methionine = N(4)-methylcytidine(1402) in 16S rRNA + S-adenosyl-L-homocysteine + H(+). In terms of biological role, specifically methylates the N4 position of cytidine in position 1402 (C1402) of 16S rRNA. The polypeptide is Ribosomal RNA small subunit methyltransferase H (Corynebacterium glutamicum (strain ATCC 13032 / DSM 20300 / JCM 1318 / BCRC 11384 / CCUG 27702 / LMG 3730 / NBRC 12168 / NCIMB 10025 / NRRL B-2784 / 534)).